A 573-amino-acid polypeptide reads, in one-letter code: Proline--tRNA ligase (573 aa).

Belongs to the class-II aminoacyl-tRNA synthetase family. ProS type 1 subfamily. As to quaternary structure, homodimer.

The protein resides in the cytoplasm. It catalyses the reaction tRNA(Pro) + L-proline + ATP = L-prolyl-tRNA(Pro) + AMP + diphosphate. Its function is as follows. Catalyzes the attachment of proline to tRNA(Pro) in a two-step reaction: proline is first activated by ATP to form Pro-AMP and then transferred to the acceptor end of tRNA(Pro). As ProRS can inadvertently accommodate and process non-cognate amino acids such as alanine and cysteine, to avoid such errors it has two additional distinct editing activities against alanine. One activity is designated as 'pretransfer' editing and involves the tRNA(Pro)-independent hydrolysis of activated Ala-AMP. The other activity is designated 'posttransfer' editing and involves deacylation of mischarged Ala-tRNA(Pro). The misacylated Cys-tRNA(Pro) is not edited by ProRS. This Limosilactobacillus fermentum (strain NBRC 3956 / LMG 18251) (Lactobacillus fermentum) protein is Proline--tRNA ligase.